A 712-amino-acid chain; its full sequence is Polyribonucleotide nucleotidyltransferase (712 aa).

Mg(2+)-binding residues include Asp484 and Asp490. The region spanning 551-610 (PKVFTIQIHPDKIRDIIGPGGKVIRAIQAETGTRVDVDDSGLVKVSAVNLEEGEAALQMI) is the KH domain. Residues 620–688 (GAVYEGTVVK…KDGKIRLSRK (69 aa)) form the S1 motif domain. The interval 689–712 (ALLEEENGKSGPENGAPQRDKNRH) is disordered.

Belongs to the polyribonucleotide nucleotidyltransferase family. The cofactor is Mg(2+).

It localises to the cytoplasm. It catalyses the reaction RNA(n+1) + phosphate = RNA(n) + a ribonucleoside 5'-diphosphate. Involved in mRNA degradation. Catalyzes the phosphorolysis of single-stranded polyribonucleotides processively in the 3'- to 5'-direction. This is Polyribonucleotide nucleotidyltransferase from Desulfatibacillum aliphaticivorans.